A 68-amino-acid polypeptide reads, in one-letter code: Conotoxin Vx2 (68 aa).

Positions M1 to A20 are cleaved as a signal peptide. The propeptide occupies L21–A47. Intrachain disulfides connect C55-C68, C56-C61, and C57-C65.

This sequence belongs to the conotoxin M superfamily. Expressed by the venom duct.

It is found in the secreted. In vivo, elicits a series of symptoms, such as being sedative, tail stiffening and twisted jumping, when injected intracranially into mice. This is Conotoxin Vx2 from Conus vexillum (Flag cone).